The sequence spans 466 residues: Ras-GEF domain-containing family member 1C (466 aa).

Disordered regions lie at residues M1–D35 and S443–T466. In terms of domain architecture, N-terminal Ras-GEF spans L34–A164. Residues D200–P446 enclose the Ras-GEF domain.

Functionally, guanine nucleotide exchange factor (GEF). This Mus musculus (Mouse) protein is Ras-GEF domain-containing family member 1C (Rasgef1c).